Here is a 398-residue protein sequence, read N- to C-terminus: Putative FBD-associated F-box protein At5g56700 (398 aa).

Residues 1–47 enclose the F-box domain; the sequence is MAKISDLSDELLVKILSFLPTKEAVSTSCLSKQWEFLWMWLSKLEFY. Positions 340–388 constitute an FBD domain; sequence WKNNKSSVPKCLLESLETFEFAGYIGTPEERDFLSYIFKHARCLKSSSI.

This Arabidopsis thaliana (Mouse-ear cress) protein is Putative FBD-associated F-box protein At5g56700.